Reading from the N-terminus, the 519-residue chain is Cyclin-dependent kinase C-1 (519 aa).

In terms of domain architecture, Protein kinase spans 25 to 325 (FEKLEQIGEG…AQDALDAEYF (301 aa)). ATP contacts are provided by residues 31 to 39 (IGEGTYGQV) and K54. A Phosphothreonine modification is found at T35. Phosphotyrosine is present on Y36. D164 (proton acceptor) is an active-site residue. A Phosphothreonine modification is found at T198. Positions 336–348 (SLPKYESSHEFQT) are enriched in basic and acidic residues. The segment at 336-519 (SLPKYESSHE…RNQQQYGNWQ (184 aa)) is disordered. The span at 426-444 (GNQGGGYPNRGGQGGGGSY) shows a compositional bias: gly residues. Residues 445-454 (GNAPYPQQGR) show a composition bias toward low complexity. Gly residues-rich tracts occupy residues 464 to 483 (GMAG…GGGS) and 490 to 499 (GPYGPSGPGR). Residues 505-519 (QQGGSRNQQQYGNWQ) show a composition bias toward polar residues.

The protein belongs to the protein kinase superfamily. CMGC Ser/Thr protein kinase family. CDC2/CDKX subfamily.

The enzyme catalyses L-seryl-[protein] + ATP = O-phospho-L-seryl-[protein] + ADP + H(+). It carries out the reaction L-threonyl-[protein] + ATP = O-phospho-L-threonyl-[protein] + ADP + H(+). It catalyses the reaction [DNA-directed RNA polymerase] + ATP = phospho-[DNA-directed RNA polymerase] + ADP + H(+). The chain is Cyclin-dependent kinase C-1 (CDKC-1) from Oryza sativa subsp. japonica (Rice).